A 250-amino-acid polypeptide reads, in one-letter code: MTTNKDVECLVEPTSNISITEENKNVTSETTTTTNNTQNKETETTDNINKEETADKENKEEQQQEENPENLIKHPLQNRWSLWYDYQSGKINPEHWVDSLKKVISFDSVEDFWCVFNNLPNVSNLKQGSSYHLFKDDIEPKWEHESNKRGGKWFVMVKDKSRCDNQWLQSVMACVGETFDSSDEICGIVYNSRKNGDKISVWTKTAQDEKATRDVGNCLKKILEIDQTIQYTPHEDFIRSSKGSKNLYEC.

Residues 1–72 (MTTNKDVECL…QQEENPENLI (72 aa)) are disordered. Positions 25-39 (NVTSETTTTTNNTQN) are enriched in low complexity. The segment covering 40–62 (KETETTDNINKEETADKENKEEQ) has biased composition (basic and acidic residues). MRNA is bound by residues 96-97 (WV), 142-143 (WE), 193-198 (RKNGDK), and 239-241 (RSS).

The protein belongs to the eukaryotic initiation factor 4E family. As to quaternary structure, eIF4F is a multi-subunit complex, the composition of which varies with external and internal environmental conditions. It is composed of at least eif4a, eif4e and eif4g.

Functionally, recognizes and binds the 7-methylguanosine-containing mRNA cap during an early step in the initiation of protein synthesis and facilitates ribosome binding by inducing the unwinding of the mRNAs secondary structures. This chain is Eukaryotic translation initiation factor 4E (eif4e), found in Dictyostelium discoideum (Social amoeba).